Consider the following 138-residue polypeptide: Acidic phospholipase A2 Ts-A6 (138 aa).

The N-terminal stretch at Met1 to Gly16 is a signal peptide. 7 disulfides stabilise this stretch: Cys42–Cys131, Cys44–Cys60, Cys59–Cys111, Cys65–Cys138, Cys66–Cys104, Cys73–Cys97, and Cys91–Cys102. Ca(2+) is bound by residues Tyr43, Gly45, and Gly47. The active site involves His63. Residue Asp64 coordinates Ca(2+). Residue Asp105 is part of the active site.

It depends on Ca(2+) as a cofactor. As to expression, expressed by the venom gland.

Its subcellular location is the secreted. The enzyme catalyses a 1,2-diacyl-sn-glycero-3-phosphocholine + H2O = a 1-acyl-sn-glycero-3-phosphocholine + a fatty acid + H(+). In terms of biological role, snake venom phospholipase A2 (PLA2) that shows a moderate inhibition of ADP-induced human platelet aggregation when tested on platelet rich plasma. Exhibits high hydrolytic activities and prefers the anionic micelles (dPPC with deoxycholate) to the zwitterionic micelles (dPPC with Triton X-100). PLA2 catalyzes the calcium-dependent hydrolysis of the 2-acyl groups in 3-sn-phosphoglycerides. The sequence is that of Acidic phospholipase A2 Ts-A6 from Trimeresurus stejnegeri (Chinese green tree viper).